The following is a 768-amino-acid chain: Cullin-3-B (768 aa).

The disordered stretch occupies residues 677-698; it reads VAAKQGESDPERKETRQKVDDD. Residues 682-698 are compositionally biased toward basic and acidic residues; the sequence is GESDPERKETRQKVDDD. Positions 698–760 constitute a Cullin neddylation domain; the sequence is DRKHEIEAAI…REYLARTPED (63 aa). Lys712 participates in a covalent cross-link: Glycyl lysine isopeptide (Lys-Gly) (interchain with G-Cter in NEDD8).

The protein belongs to the cullin family. In terms of assembly, component of multiple BCR (BTB-CUL3-RBX1) E3 ubiquitin-protein ligase complexes formed of cul3, rbx1 and a variable BTB domain-containing protein acting as both, adapter to cullin and substrate recognition subunit. Interacts with btbd6. Neddylated. Attachment of NEDD8 is required for the E3 ubiquitin-protein ligase activity of the SCF-like complex.

It localises to the nucleus. It participates in protein modification; protein ubiquitination. In terms of biological role, probable core component of cullin-based SCF-like E3 ubiquitin-protein ligase complexes which mediate the ubiquitination and subsequent proteasomal degradation of target proteins. The E3 ubiquitin-protein ligase activity of the complex is dependent on the neddylation of the cullin subunit. Involved in ER-Golgi transport by regulating the size of COPII coats, thereby playing a key role in collagen export, which is required for embryonic stem (ES) cells division. May play a role in the regulation of mittotic entry via ubiquitination of aurka. In Xenopus laevis (African clawed frog), this protein is Cullin-3-B (cul3b).